Reading from the N-terminus, the 209-residue chain is MRKNNGIKWWGWVTLSVLVMVAGDGTLAFAQETGGSAGWRPVYDNVMLVINFLILVFLLAKLLKNPLKNFLKTRHDEVAKELERLETERERAANDVADTKKQVAAEGTHILEIRERIIAEGERTKLAIIENAKKESEFLIEAARRRIQGRFQEARQAFRSELIESAMSIVSRRLPQEIGPQDQARQVDLFFTSLDQAQSKFSSARSASR.

The helical transmembrane segment at 9–29 (WWGWVTLSVLVMVAGDGTLAF) threads the bilayer.

Belongs to the ATPase B chain family. F-type ATPases have 2 components, F(1) - the catalytic core - and F(0) - the membrane proton channel. F(1) has five subunits: alpha(3), beta(3), gamma(1), delta(1), epsilon(1). F(0) has three main subunits: a(1), b(2) and c(10-14). The alpha and beta chains form an alternating ring which encloses part of the gamma chain. F(1) is attached to F(0) by a central stalk formed by the gamma and epsilon chains, while a peripheral stalk is formed by the delta and b chains.

It localises to the cell inner membrane. F(1)F(0) ATP synthase produces ATP from ADP in the presence of a proton or sodium gradient. F-type ATPases consist of two structural domains, F(1) containing the extramembraneous catalytic core and F(0) containing the membrane proton channel, linked together by a central stalk and a peripheral stalk. During catalysis, ATP synthesis in the catalytic domain of F(1) is coupled via a rotary mechanism of the central stalk subunits to proton translocation. Its function is as follows. Component of the F(0) channel, it forms part of the peripheral stalk, linking F(1) to F(0). This Desulfosudis oleivorans (strain DSM 6200 / JCM 39069 / Hxd3) (Desulfococcus oleovorans) protein is ATP synthase subunit b 2.